The primary structure comprises 193 residues: Peptidyl-tRNA hydrolase (193 aa).

Tyr16 contacts tRNA. His21 acts as the Proton acceptor in catalysis. Positions 67, 69, and 115 each coordinate tRNA.

This sequence belongs to the PTH family. Monomer.

Its subcellular location is the cytoplasm. It catalyses the reaction an N-acyl-L-alpha-aminoacyl-tRNA + H2O = an N-acyl-L-amino acid + a tRNA + H(+). Functionally, hydrolyzes ribosome-free peptidyl-tRNAs (with 1 or more amino acids incorporated), which drop off the ribosome during protein synthesis, or as a result of ribosome stalling. Its function is as follows. Catalyzes the release of premature peptidyl moieties from peptidyl-tRNA molecules trapped in stalled 50S ribosomal subunits, and thus maintains levels of free tRNAs and 50S ribosomes. This chain is Peptidyl-tRNA hydrolase, found in Psychrobacter arcticus (strain DSM 17307 / VKM B-2377 / 273-4).